The following is a 355-amino-acid chain: uncharacterized protein (355 aa).

The N-terminal stretch at 1 to 22 (MRLTHVTACICLLVAVAVLFSG) is a signal peptide.

This sequence belongs to the bacterial solute-binding protein 1 family. WtpA subfamily.

This is an uncharacterized protein from Methanoculleus marisnigri (strain ATCC 35101 / DSM 1498 / JR1).